A 197-amino-acid chain; its full sequence is Imidazoleglycerol-phosphate dehydratase (197 aa).

Belongs to the imidazoleglycerol-phosphate dehydratase family.

It localises to the cytoplasm. It catalyses the reaction D-erythro-1-(imidazol-4-yl)glycerol 3-phosphate = 3-(imidazol-4-yl)-2-oxopropyl phosphate + H2O. It participates in amino-acid biosynthesis; L-histidine biosynthesis; L-histidine from 5-phospho-alpha-D-ribose 1-diphosphate: step 6/9. This Pseudomonas putida (strain GB-1) protein is Imidazoleglycerol-phosphate dehydratase.